The chain runs to 2209 residues: Genome polyprotein (2209 aa).

Residue G2 is the site of N-myristoyl glycine; by host attachment. At 2–1520 (GAQVSSQKVG…NINRAMTILQ (1519 aa)) the chain is on the cytoplasmic side. Residues 580–600 (GLGQMLESMIDNTVRETVGAA) form an amphipathic alpha-helix region. The tract at residues 599–619 (AATSRDALPNTEASGPTHSKE) is disordered. Active-site for protease 2A activity residues include H901 and D919. Zn(2+) is bound by residues C936 and C938. The active-site For protease 2A activity is the C990. Residues C996 and H998 each contribute to the Zn(2+) site. Residues 1128–1200 (GDSWLKKFTE…HQSCPSQEHQ (73 aa)) form a membrane-binding region. The tract at residues 1128–1266 (GDSWLKKFTE…SPGTGKSVAT (139 aa)) is oligomerization. The interval 1149-1153 (SNKIS) is RNA-binding. The 157-residue stretch at 1232–1388 (EHTINNYIQF…NEYSRDGKLN (157 aa)) folds into the SF3 helicase domain. 1256–1263 (GSPGTGKS) lines the ATP pocket. Residues C1396, C1399, C1408, and C1413 each coordinate Zn(2+). A C4-type zinc finger spans residues 1396-1413 (CKNCHQPANFKRCCPLVC). The tract at residues 1440 to 1447 (ERNRRSNI) is RNA-binding. Positions 1451–1456 (MEALFQ) are oligomerization. The stretch at 1521-1536 (AVTTFAAVAGVVYVMY) is an intramembrane region. Topologically, residues 1537-2209 (KLFAGHQGAY…TLYRRWLDSF (673 aa)) are cytoplasmic. O-(5'-phospho-RNA)-tyrosine is present on Y1546. At Y1546 the chain carries O-UMP-tyrosine; transient. The Peptidase C3 domain maps to 1566–1744 (GPGFDYAVAM…FAAALKRSYF (179 aa)). Active-site for protease 3C activity residues include H1605, E1636, and C1712. Residues 1975 to 2090 (EKLFAFDYTG…SYPHEVDASL (116 aa)) form the RdRp catalytic domain. Mg(2+)-binding residues include D1981 and D2076.

It belongs to the picornaviruses polyprotein family. As to quaternary structure, interacts with capsid protein VP1 and capsid protein VP3 to form heterotrimeric protomers. Interacts with capsid protein VP0, and capsid protein VP3 to form heterotrimeric protomers. Five protomers subsequently associate to form pentamers which serve as building blocks for the capsid. Interacts with capsid protein VP2, capsid protein VP3 and capsid protein VP4 following cleavage of capsid protein VP0. Interacts with human PVR. In terms of assembly, interacts with capsid protein VP1 and capsid protein VP3 in the mature capsid. As to quaternary structure, interacts with capsid protein VP0 and capsid protein VP1 to form heterotrimeric protomers. Five protomers subsequently associate to form pentamers which serve as building blocks for the capsid. Interacts with capsid protein VP4 in the mature capsid. Interacts with protein 2C; this interaction may be important for virion morphogenesis. Interacts with capsid protein VP1 and capsid protein VP3. In terms of assembly, homodimer. As to quaternary structure, homohexamer; forms a hexameric ring structure with 6-fold symmetry characteristic of AAA+ ATPases. Interacts (via N-terminus) with host RTN3 (via reticulon domain); this interaction is important for viral replication. Interacts with capsid protein VP3; this interaction may be important for virion morphogenesis. Interacts with protein 3CD. In terms of assembly, homodimer. Interacts with host GBF1. Interacts (via GOLD domain) with host ACBD3 (via GOLD domain); this interaction allows the formation of a viral protein 3A/ACBD3 heterotetramer with a 2:2 stoichiometry, which will stimulate the recruitment of host PI4KB in order to synthesize PI4P at the viral RNA replication sites. As to quaternary structure, interacts with RNA-directed RNA polymerase. Interacts with protein 3AB and with RNA-directed RNA polymerase. In terms of assembly, interacts with Viral protein genome-linked and with protein 3CD. Mg(2+) is required as a cofactor. Post-translationally, specific enzymatic cleavages in vivo by the viral proteases yield processing intermediates and the mature proteins. In terms of processing, myristoylation is required for the formation of pentamers during virus assembly. Further assembly of 12 pentamers and a molecule of genomic RNA generates the provirion. During virion maturation, immature virions are rendered infectious following cleavage of VP0 into VP4 and VP2. This maturation seems to be an autocatalytic event triggered by the presence of RNA in the capsid and it is followed by a conformational change infectious virion. Post-translationally, myristoylation is required during RNA encapsidation and formation of the mature virus particle. In terms of processing, VPg is uridylylated by the polymerase into VPg-pUpU. This acts as a nucleotide-peptide primer for the genomic RNA replication.

The protein localises to the virion. The protein resides in the host cytoplasm. Its subcellular location is the host cytoplasmic vesicle membrane. It is found in the host nucleus. The catalysed reaction is RNA(n) + a ribonucleoside 5'-triphosphate = RNA(n+1) + diphosphate. It carries out the reaction Selective cleavage of Tyr-|-Gly bond in the picornavirus polyprotein.. The enzyme catalyses a ribonucleoside 5'-triphosphate + H2O = a ribonucleoside 5'-diphosphate + phosphate + H(+). It catalyses the reaction Selective cleavage of Gln-|-Gly bond in the poliovirus polyprotein. In other picornavirus reactions Glu may be substituted for Gln, and Ser or Thr for Gly.. Replication or transcription is subject to high level of random mutations by the nucleotide analog ribavirin. Forms an icosahedral capsid of pseudo T=3 symmetry with capsid proteins VP2 and VP3. The capsid is 300 Angstroms in diameter, composed of 60 copies of each capsid protein and enclosing the viral positive strand RNA genome. Capsid protein VP1 mainly forms the vertices of the capsid. Capsid protein VP1 interacts with host cell receptor PVR to provide virion attachment to target host epithelial cells. This attachment induces virion internalization predominantly through clathrin- and caveolin-independent endocytosis in Hela cells and through caveolin-mediated endocytosis in brain microvascular endothelial cells. Tyrosine kinases are probably involved in the entry process. Virus binding to PVR induces increased junctional permeability and rearrangement of junctional proteins. Modulation of endothelial tight junctions, as well as cytolytic infection of endothelial cells themselves, may result in loss of endothelial integrity which may help the virus to reach the CNS. After binding to its receptor, the capsid undergoes conformational changes. Capsid protein VP1 N-terminus (that contains an amphipathic alpha-helix) and capsid protein VP4 are externalized. Together, they shape a pore in the host membrane through which viral genome is translocated to host cell cytoplasm. In terms of biological role, forms an icosahedral capsid of pseudo T=3 symmetry with capsid proteins VP1 and VP3. The capsid is 300 Angstroms in diameter, composed of 60 copies of each capsid protein and enclosing the viral positive strand RNA genome. Functionally, forms an icosahedral capsid of pseudo T=3 symmetry with capsid proteins VP2 and VP1. The capsid is 300 Angstroms in diameter, composed of 60 copies of each capsid protein and enclosing the viral positive strand RNA genome. Its function is as follows. Lies on the inner surface of the capsid shell. After binding to the host receptor, the capsid undergoes conformational changes. Capsid protein VP4 is released, Capsid protein VP1 N-terminus is externalized, and together, they shape a pore in the host membrane through which the viral genome is translocated into the host cell cytoplasm. Component of immature procapsids, which is cleaved into capsid proteins VP4 and VP2 after maturation. Allows the capsid to remain inactive before the maturation step. In terms of biological role, cysteine protease that cleaves viral polyprotein and specific host proteins. It is responsible for the autocatalytic cleavage between the P1 and P2 regions, which is the first cleavage occurring in the polyprotein. Also cleaves the host translation initiation factor EIF4G1, in order to shut down the capped cellular mRNA translation. Inhibits the host nucleus-cytoplasm protein and RNA trafficking by cleaving host members of the nuclear pores including NUP98, NUP62 and NUP153. Counteracts stress granule formation probably by antagonizing its assembly or promoting its dissassembly. Cleaves and inhibits host IFIH1/MDA5, thereby inhibiting the type-I IFN production and the establishment of the antiviral state. Cleaves and inhibits host MAVS, thereby inhibiting the type-I IFN production and the establishment of the antiviral state. Functionally, plays an essential role in the virus replication cycle by acting as a viroporin. Creates a pore in the host endoplasmic reticulum and as a consequence releases Ca2+ in the cytoplasm of infected cell. In turn, high levels of cytoplasmic calcium may trigger membrane trafficking and transport of viral ER-associated proteins to viroplasms, sites of viral genome replication. Its function is as follows. Induces and associates with structural rearrangements of intracellular membranes. Displays RNA-binding, nucleotide binding and NTPase activities. May play a role in virion morphogenesis and viral RNA encapsidation by interacting with the capsid protein VP3. Localizes the viral replication complex to the surface of membranous vesicles. Together with protein 3CD binds the Cis-Active RNA Element (CRE) which is involved in RNA synthesis initiation. Acts as a cofactor to stimulate the activity of 3D polymerase, maybe through a nucleid acid chaperone activity. In terms of biological role, localizes the viral replication complex to the surface of membranous vesicles. It inhibits host cell endoplasmic reticulum-to-Golgi apparatus transport and causes the disassembly of the Golgi complex, possibly through GBF1 interaction. This would result in depletion of MHC, trail receptors and IFN receptors at the host cell surface. Plays an essential role in viral RNA replication by recruiting ACBD3 and PI4KB at the viral replication sites, thereby allowing the formation of the rearranged membranous structures where viral replication takes place. Functionally, acts as a primer for viral RNA replication and remains covalently bound to viral genomic RNA. VPg is uridylylated prior to priming replication into VPg-pUpU. The oriI viral genomic sequence may act as a template for this. The VPg-pUpU is then used as primer on the genomic RNA poly(A) by the RNA-dependent RNA polymerase to replicate the viral genome. During genome replication, the VPg-RNA linkage is removed by the host TDP2, thereby accelerating replication. During the late stage of the replication cycle, host TDP2 is excluded from sites of viral RNA synthesis and encapsidation, allowing for the generation of progeny virions. Its function is as follows. Involved in the viral replication complex and viral polypeptide maturation. It exhibits protease activity with a specificity and catalytic efficiency that is different from protease 3C. Protein 3CD binds to the 5'UTR of the viral genome. Major viral protease that mediates proteolytic processing of the polyprotein. Cleaves host EIF5B, contributing to host translation shutoff. Cleaves also host PABPC1, contributing to host translation shutoff. Cleaves host RIGI and thus contributes to the inhibition of type I interferon production. Cleaves host NLRP1, triggers host N-glycine-mediated degradation of the autoinhibitory NLRP1 N-terminal fragment. Inhibits the integrated stress response (ISR) in the infected cell by cleaving host G3BP1. Stress granule formation is thus inhibited, which allows protein synthesis and viral replication. In terms of biological role, replicates the viral genomic RNA on the surface of intracellular membranes. May form linear arrays of subunits that propagate along a strong head-to-tail interaction called interface-I. Covalently attaches UMP to a tyrosine of VPg, which is used to prime RNA synthesis. The positive stranded RNA genome is first replicated at virus induced membranous vesicles, creating a dsRNA genomic replication form. This dsRNA is then used as template to synthesize positive stranded RNA genomes. ss(+)RNA genomes are either translated, replicated or encapsidated. The polypeptide is Genome polyprotein (Homo sapiens (Human)).